The chain runs to 1071 residues: Carbamoyl phosphate synthase pyrimidine-specific large chain (1071 aa).

The carboxyphosphate synthetic domain stretch occupies residues 1–401 (MPKRVDINKI…SLLKAVRSLE (401 aa)). 12 residues coordinate ATP: R129, R169, G175, G176, K208, I210, E215, G241, I242, H243, Q284, and E298. Positions 133–327 (RTLMNELNEP…IAKLAAKIAV (195 aa)) constitute an ATP-grasp 1 domain. Mg(2+) contacts are provided by Q284, E298, and N300. Residues Q284, E298, and N300 each coordinate Mn(2+). Residues 402 to 546 (ADVYHLELKD…YSTYEEENES (145 aa)) are oligomerization domain. The carbamoyl phosphate synthetic domain stretch occupies residues 547-929 (VVTDKKSVMV…ALYKALIASG (383 aa)). The region spanning 671–861 (EQALGELGVP…MANLATKIIL (191 aa)) is the ATP-grasp 2 domain. ATP contacts are provided by R707, R746, L748, E752, G777, V778, H779, S780, Q820, and E832. Mg(2+) is bound by residues Q820, E832, and N834. 3 residues coordinate Mn(2+): Q820, E832, and N834. Positions 930 to 1071 (IQIPNYGSVL…NTNQEAAVTI (142 aa)) constitute an MGS-like domain. The allosteric domain stretch occupies residues 930–1071 (IQIPNYGSVL…NTNQEAAVTI (142 aa)).

The protein belongs to the CarB family. As to quaternary structure, composed of two chains; the small (or glutamine) chain promotes the hydrolysis of glutamine to ammonia, which is used by the large (or ammonia) chain to synthesize carbamoyl phosphate. Tetramer of heterodimers (alpha,beta)4. Interacts with BrxC. The cofactor is Mg(2+). Requires Mn(2+) as cofactor.

It catalyses the reaction hydrogencarbonate + L-glutamine + 2 ATP + H2O = carbamoyl phosphate + L-glutamate + 2 ADP + phosphate + 2 H(+). The enzyme catalyses hydrogencarbonate + NH4(+) + 2 ATP = carbamoyl phosphate + 2 ADP + phosphate + 2 H(+). It participates in amino-acid biosynthesis; L-arginine biosynthesis; carbamoyl phosphate from bicarbonate: step 1/1. Its pathway is pyrimidine metabolism; UMP biosynthesis via de novo pathway; (S)-dihydroorotate from bicarbonate: step 1/3. Its function is as follows. Small subunit of the glutamine-dependent carbamoyl phosphate synthetase (CPSase). CPSase catalyzes the formation of carbamoyl phosphate from the ammonia moiety of glutamine, carbonate, and phosphate donated by ATP, constituting the first step of the biosynthetic pathway leading to pyrimidine nucleotides. The large subunit (synthetase) binds the substrates ammonia (free or transferred from glutamine from the small subunit), hydrogencarbonate and ATP and carries out an ATP-coupled ligase reaction, activating hydrogencarbonate by forming carboxy phosphate which reacts with ammonia to form carbamoyl phosphate. In Bacillus subtilis (strain 168), this protein is Carbamoyl phosphate synthase pyrimidine-specific large chain (pyrAB).